The chain runs to 633 residues: Proline-rich receptor-like protein kinase PERK4 (633 aa).

Positions 1–29 are enriched in low complexity; it reads MASSPESAPPTNSTSSPSPPSNTNSTTSS. A disordered region spans residues 1 to 145; it reads MASSPESAPP…GSSGGGGGGR (145 aa). Residues 1–151 are Extracellular-facing; it reads MASSPESAPP…GGGRSNTNTA (151 aa). 2 N-linked (GlcNAc...) asparagine glycosylation sites follow: asparagine 12 and asparagine 24. 2 stretches are compositionally biased toward pro residues: residues 30–41 and 48–65; these read PPAPSPPSPTPP and SPPPDSTSPPAPQAPNPP. N-linked (GlcNAc...) asparagine glycosylation occurs at asparagine 66. A compositionally biased stretch (gly residues) spans 77-90; it reads QGGGGERGNGGNNG. Over residues 106–135 the composition is skewed to low complexity; sequence SRSNGDNGGSRSSPPGDTGGSRSDNPPSSG. A compositionally biased stretch (gly residues) spans 136 to 145; sequence GSSGGGGGGR. The helical transmembrane segment at 152 to 172 threads the bilayer; sequence IIVGVLVGAGLLMIVLIIVCL. Residues 173-633 lie on the Cytoplasmic side of the membrane; sequence RRKKKRKDSF…MGTKSPTPPK (461 aa). Over residues 193-222 the composition is skewed to low complexity; the sequence is QYYGNNNNNNASQNYPNWHLNSQGQNQQST. Residues 193-255 form a disordered region; sequence QYYGNNNNNN…SMYSGPSRPV (63 aa). Threonine 273 carries the phosphothreonine modification. The region spanning 284–562 is the Protein kinase domain; it reads FTDANLLGQG…VRALEGEVSL (279 aa). ATP-binding positions include 290–298 and lysine 312; that span reads LGQGGFGYV. The residue at position 357 (tyrosine 357) is a Phosphotyrosine. Aspartate 408 acts as the Proton acceptor in catalysis. A Phosphoserine modification is found at serine 441. 2 positions are modified to phosphothreonine: threonine 442 and threonine 447. Residue tyrosine 455 is modified to Phosphotyrosine. Residues 608-619 are compositionally biased toward polar residues; the sequence is FPVSDCEGTSSN. Residues 608–633 are disordered; it reads FPVSDCEGTSSNDSRDMGTKSPTPPK.

Belongs to the protein kinase superfamily. Ser/Thr protein kinase family. In terms of tissue distribution, mostly expressed in inflorescence bolts. Also present in roots, stems, germinated seeds, cotyledons, pollen, stamen and stigma.

The protein localises to the cell membrane. The enzyme catalyses L-seryl-[protein] + ATP = O-phospho-L-seryl-[protein] + ADP + H(+). The catalysed reaction is L-threonyl-[protein] + ATP = O-phospho-L-threonyl-[protein] + ADP + H(+). Activated by ABA and Ca(2+). Its function is as follows. Required during abscisic acid (ABA)-mediated activation of Ca(2+) channels. Regulates ABA signaling pathways. Modulates the expression of genes related to cell elongation and ABA signaling during root growth. The sequence is that of Proline-rich receptor-like protein kinase PERK4 (PERK4) from Arabidopsis thaliana (Mouse-ear cress).